The following is a 185-amino-acid chain: Guanylate kinase (185 aa).

In terms of domain architecture, Guanylate kinase-like spans 4–181 (GALYVVSGPS…ACNDLISIIE (178 aa)). 11 to 18 (GPSGAGKS) is a binding site for ATP.

The protein belongs to the guanylate kinase family.

The protein resides in the cytoplasm. It carries out the reaction GMP + ATP = GDP + ADP. Functionally, essential for recycling GMP and indirectly, cGMP. This is Guanylate kinase from Fusobacterium nucleatum subsp. nucleatum (strain ATCC 25586 / DSM 15643 / BCRC 10681 / CIP 101130 / JCM 8532 / KCTC 2640 / LMG 13131 / VPI 4355).